We begin with the raw amino-acid sequence, 320 residues long: ATP-dependent 6-phosphofructokinase (320 aa).

Residue Gly11 coordinates ATP. Position 21–25 (21–25 (RAVVR)) interacts with ADP. Residues 72 to 73 (RC) and 102 to 105 (GDGS) each bind ATP. Asp103 is a Mg(2+) binding site. 125-127 (TID) provides a ligand contact to substrate. The active-site Proton acceptor is Asp127. Arg154 serves as a coordination point for ADP. Residues Arg162 and 169–171 (MGR) each bind substrate. Residues 185–187 (GAE) and 214–216 (KTH) each bind ADP. Substrate is bound by residues Glu223, Arg244, and 250-253 (HIQR).

This sequence belongs to the phosphofructokinase type A (PFKA) family. ATP-dependent PFK group I subfamily. Prokaryotic clade 'B1' sub-subfamily. In terms of assembly, homotetramer. Mg(2+) is required as a cofactor.

It is found in the cytoplasm. The enzyme catalyses beta-D-fructose 6-phosphate + ATP = beta-D-fructose 1,6-bisphosphate + ADP + H(+). Its pathway is carbohydrate degradation; glycolysis; D-glyceraldehyde 3-phosphate and glycerone phosphate from D-glucose: step 3/4. With respect to regulation, allosterically activated by ADP and other diphosphonucleosides, and allosterically inhibited by phosphoenolpyruvate. In terms of biological role, catalyzes the phosphorylation of D-fructose 6-phosphate to fructose 1,6-bisphosphate by ATP, the first committing step of glycolysis. The protein is ATP-dependent 6-phosphofructokinase of Clostridium botulinum (strain Alaska E43 / Type E3).